The sequence spans 507 residues: MVTIRADEISNIIRERIEQYNREVKIVNTGTVLQVGDGIARIHGLDEVMAGELVEFEESTIGIAPNLESNNVGVVLMGDGLMIQEGSSVKATGRIAQIPVSEAYLGRVINALAKPIDGRGEISSSESRLIESPAPGIISRRSVYEPLQTGLIAIDSMIPIGRGQRELIIGDRQTGKTAVATDTILNQKGQNVICVYVAIGQKASSVAQVVTTFQEQGAMEYTIVVAETADSPATLQYLAPYTGAALAEYFMYRERHTLIIHDDPSKQAQAYRQMSLLLRRPPGREAYPGDVFYLHSRLLERAAKSSSRLGEGSMTALPIVETQSGDVSAYIPTNVISITDGQIFLSADLFNAGIRPAINVGISVSRVGSAAQIKAMKQVAGKSKLELAQFAELEAFAQFASDLDKATQNQLARGQRLRELLKQSQAAPLAVEEQVVTIYTGANGYLDPLEIGQVKKFLVQLRTYLRTNKPQFQEIISSTRTFTEEAEAILKEAIQEQIELFLFQEQT.

ATP is bound at residue 170-177 (GDRQTGKT).

Belongs to the ATPase alpha/beta chains family. In terms of assembly, F-type ATPases have 2 components, CF(1) - the catalytic core - and CF(0) - the membrane proton channel. CF(1) has five subunits: alpha(3), beta(3), gamma(1), delta(1), epsilon(1). CF(0) has four main subunits: a, b, b' and c.

It is found in the plastid. The protein localises to the chloroplast thylakoid membrane. The catalysed reaction is ATP + H2O + 4 H(+)(in) = ADP + phosphate + 5 H(+)(out). Its function is as follows. Produces ATP from ADP in the presence of a proton gradient across the membrane. The alpha chain is a regulatory subunit. This Amborella trichopoda protein is ATP synthase subunit alpha, chloroplastic.